A 401-amino-acid polypeptide reads, in one-letter code: Nodal homolog 3-C (401 aa).

The N-terminal stretch at 1–18 is a signal peptide; sequence MAFLSLFLCLVFSSPLMA. A propeptide spanning residues 19–274 is cleaved from the precursor; that stretch reads MPPALQGRKA…KVNGFRRLRR (256 aa). 3 N-linked (GlcNAc...) asparagine glycosylation sites follow: Asn168, Asn337, and Asn344. 2 disulfide bridges follow: Cys299/Cys365 and Cys328/Cys396.

Belongs to the TGF-beta family. As to quaternary structure, monomer. The propeptide region interacts with bmp4 in a non-covalent manner. In terms of tissue distribution, expressed in the dorsal marginal region of late blastula, becoming restricted to the Spemann organizer at the early gastrula stage.

It is found in the secreted. In terms of biological role, exhibits mesoderm-dorsalizing activity and neural-inducing activity, but lacks mesoderm-inducing activity. Regulates the expression of specific mesodermal and neural genes. Induces convergent extension movements at the embryonic midline by activating the fgf signaling pathway to induce t/bra expression in the organizer region. Acts with wnt11 to induce Spemann organizer cells and induce axis formation. The unprocessed protein antagonizes bmp-signaling. The polypeptide is Nodal homolog 3-C (Xenopus tropicalis (Western clawed frog)).